The chain runs to 731 residues: Zinc finger protein 615 (731 aa).

The KRAB domain occupies 8–79 (LTLEDVAVDF…EDEIYSRICS (72 aa)). 19 C2H2-type zinc fingers span residues 204 to 226 (HVCSECGKAFLKLSQFIDHQRVH), 232 to 254 (HVCSMCGKAFSRKSRLMDHQRTH), 260 to 282 (YECTECDKTFLKKSQLNIHQKTH), 288 to 310 (YTCSQCGKAFIKKCRLIYHQRTH), 316 to 338 (HGCSVCGKAFSTKFSLTTHQKTH), 344 to 366 (YICSECGKGFIEKRRLTAHHRTH), 372 to 394 (FICNKCGKGFTLKNSLITHQQTH), 400 to 422 (YTCSECGKGFSMKHCLMVHQRTH), 428 to 450 (YKCNECGKGFALKSPLIRHQRTH), 456 to 478 (YVCTECRKGFTMKSDLIVHQRTH), 484 to 506 (YICNDCGKGFTVKSRLIVHQRTH), 512 to 534 (YVCGECGKGFPAKIRLMGHQRTH), 540 to 562 (YICNECGKGFTEKSHLNVHRRTH), 568 to 590 (YVCSECGKGLTGKSMLIAHQRTH), 596 to 618 (YICNECGKGFTMKSTLSIHQQTH), 624 to 646 (YKCNECDKTFRKKTCLIQHQRFH), 652 to 674 (FACTECGKFSLRKNDLITHQRIH), 680 to 702 (YKCSDCGKAFTTKSGLNVHQRKH), and 708 to 730 (YGCSDCGKAFAHLSILVKHRRIH).

This sequence belongs to the krueppel C2H2-type zinc-finger protein family.

The protein resides in the nucleus. Functionally, may be involved in transcriptional regulation. This is Zinc finger protein 615 (ZNF615) from Homo sapiens (Human).